The chain runs to 1513 residues: Lid2 complex component lid2 (1513 aa).

The region spanning 56–97 (GLSVQLNASNMTDPFKFLLDNWHTIFKNGAIKLLPPEGWQIP) is the JmjN domain. Residues 121-212 (YEKNYDYFKK…YIKPFERDSS (92 aa)) form the ARID domain. Residues 211–253 (SSPSFKSKRSESSTRKIRNTRSSAQQESPIPETSAQSPVQTIQ) are disordered. A compositionally biased stretch (polar residues) spans 230–253 (TRSSAQQESPIPETSAQSPVQTIQ). Residues 268-318 (GEQCEYCGLDKNPETILLCDGCEAAYHTSCLDPPLTSIPKEDWYCDACKFN) form a PHD-type 1 zinc finger. The 167-residue stretch at 408 to 574 (KYSSEPWNLH…DGLLNSSISV (167 aa)) folds into the JmjC domain. A Phosphoserine modification is found at serine 722. A disordered region spans residues 1063–1086 (LSLNDRPGPPMEPASRETSPDSEG). Positions 1076-1086 (ASRETSPDSEG) are enriched in basic and acidic residues. The PHD-type 2 zinc finger occupies 1093-1145 (KKGCIFCFCRLPESGVMIECEICHEWYHAKCLKMSKKKLRQDEKFTCPICDYR). Residues 1096-1143 (CIFCFCRLPESGVMIECEICHEWYHAKCLKMSKKKLRQDEKFTCPICD) form an RING-type 1; degenerate zinc finger. Disordered regions lie at residues 1244-1268 (APNPPPIIGESKSTRKPRPTKRQRQ) and 1280-1327 (ASAI…NNKN). The span at 1257–1268 (TRKPRPTKRQRQ) shows a compositional bias: basic residues. Basic and acidic residues predominate over residues 1301 to 1313 (VEAETKSKSEKSP). Residues 1316–1326 (NGTNISDANNK) are compositionally biased toward polar residues. The segment at 1352 to 1403 (NSSCLCGEEFSPRDSFIDCTICERRFHYDCVGLNNEIADSVSKFTCPICMEQ) adopts a PHD-type 3 zinc-finger fold. The segment at 1354–1401 (SCLCGEEFSPRDSFIDCTICERRFHYDCVGLNNEIADSVSKFTCPICM) adopts an RING-type 2; degenerate zinc-finger fold.

Component of the Lid2 complex composed of ash2, jmj3, lid2, sdc1 and snt2.

Its subcellular location is the nucleus. The polypeptide is Lid2 complex component lid2 (lid2) (Schizosaccharomyces pombe (strain 972 / ATCC 24843) (Fission yeast)).